A 382-amino-acid polypeptide reads, in one-letter code: Protein NASP homolog 1 (382 aa).

Residues Met-1 to Glu-39 are disordered. Basic and acidic residues predominate over residues Ser-10 to Gly-25. A TPR 1 repeat occupies Leu-42–Ile-75. Basic and acidic residues predominate over residues Gln-103–Glu-112. A disordered region spans residues Gln-103–Thr-151. Residues Lys-125–Asp-150 show a composition bias toward acidic residues. 2 TPR repeats span residues Ala-191–Val-224 and Ala-233–Arg-266. The stretch at Ile-264–Met-304 forms a coiled coil. The interval Pro-337–Ile-382 is disordered. The span at Ala-369 to Ile-382 shows a compositional bias: basic and acidic residues.

This sequence belongs to the NASP family. In terms of assembly, may interact with zinc finger protein tra-4 and histone deacetylase hda-1.

The protein resides in the nucleus. Functionally, promotes normal hermaphrodite (XX) development, in concert with zinc finger protein tra-4 and histone deacetylase hda-1, perhaps as components of a complex. May act redundantly with nasp-2. Involved in innate immune response to B.thuringiensis strain DB27 and S.aureus bacteria. May play a role in the uptake or spreading of dsRNA. This is Protein NASP homolog 1 from Caenorhabditis elegans.